The following is a 401-amino-acid chain: Restriction of telomere capping protein 4 (401 aa).

At Ser-23 the chain carries Phosphoserine. Basic and acidic residues predominate over residues 35–48 (KHDIHDRESDDLSG). The tract at residues 35–59 (KHDIHDRESDDLSGHDAFSPSKKRG) is disordered.

Belongs to the RTC4 family.

It is found in the cytoplasm. The protein localises to the nucleus. Functionally, may be involved in a process influencing telomere capping. This chain is Restriction of telomere capping protein 4 (RTC4), found in Saccharomyces cerevisiae (strain YJM789) (Baker's yeast).